Consider the following 67-residue polypeptide: Large ribosomal subunit protein eL24 (67 aa).

The Zn(2+) site is built by C7, C10, C33, and C37. A C4-type zinc finger spans residues 7-37 (CSYCGKPFEPGTGKMFVRNDGRVLFFCSRKC).

Belongs to the eukaryotic ribosomal protein eL24 family. Part of the 50S ribosomal subunit. Forms a cluster with proteins L3 and L14. Zn(2+) is required as a cofactor.

Binds to the 23S rRNA. In Pyrococcus abyssi (strain GE5 / Orsay), this protein is Large ribosomal subunit protein eL24.